Here is a 52-residue protein sequence, read N- to C-terminus: ALPLDGDQPADQPAERMQDISPELNPLFHPVKRGCCSPWNCIQLRACPCCPN.

A signal peptide is located at residue alanine 1. Residues 2 to 33 (LPLDGDQPADQPAERMQDISPELNPLFHPVKR) constitute a propeptide that is removed on maturation. 3 cysteine pairs are disulfide-bonded: cysteine 35-cysteine 49, cysteine 36-cysteine 47, and cysteine 41-cysteine 50. Proline 38, proline 48, and proline 51 each carry 4-hydroxyproline. At asparagine 52 the chain carries Asparagine amide.

In terms of tissue distribution, expressed by the venom duct.

The protein localises to the secreted. The sequence is that of Conotoxin reg3h from Conus regius (Crown cone).